Consider the following 1002-residue polypeptide: Hypoxia up-regulated protein 1 (1002 aa).

The signal sequence occupies residues 1–23 (MARAPRWMLGWLLLACCVPHTEP). Disordered regions lie at residues 576 to 698 (LFGG…PKKQ) and 918 to 1002 (KPKP…NDEL). A compositionally biased stretch (basic and acidic residues) spans 643–675 (PPKEESQKNEEGEKSEARDPKEDKETVNEEELS). A compositionally biased stretch (polar residues) spans 933–947 (GKNATGTSESENTIP). Basic and acidic residues-rich tracts occupy residues 951-962 (GKQEEKPEDISP) and 983-1002 (SSKK…NDEL). A Prevents secretion from ER motif is present at residues 999 to 1002 (NDEL).

This sequence belongs to the heat shock protein 70 family.

It is found in the endoplasmic reticulum lumen. Has a pivotal role in cytoprotective cellular mechanisms triggered by oxygen deprivation. Promotes HSPA5/BiP-mediated ATP nucleotide exchange and thereby activates the unfolded protein response (UPR) pathway in the presence of endoplasmic reticulum stress. May play a role as a molecular chaperone and participate in protein folding. The protein is Hypoxia up-regulated protein 1 (HYOU1) of Gallus gallus (Chicken).